The sequence spans 565 residues: Mannosyl-oligosaccharide 1,2-alpha-mannosidase (565 aa).

Cys320 and Cys363 form a disulfide bridge. Residue Glu378 is the Proton donor of the active site. Ca(2+) is bound at residue Thr501. Composition is skewed to basic and acidic residues over residues 526 to 538 and 550 to 565; these read NEKA…KVID and KSAD…EIAG. A disordered region spans residues 526–565; that stretch reads NEKAQMRESKVIDKSNLPEAQPVDKSADQEAKEIIEEIAG.

The protein belongs to the glycosyl hydrolase 47 family. Ca(2+) serves as cofactor.

It carries out the reaction N(4)-(alpha-D-Man-(1-&gt;2)-alpha-D-Man-(1-&gt;2)-alpha-D-Man-(1-&gt;3)-[alpha-D-Man-(1-&gt;2)-alpha-D-Man-(1-&gt;3)-[alpha-D-Man-(1-&gt;2)-alpha-D-Man-(1-&gt;6)]-alpha-D-Man-(1-&gt;6)]-beta-D-Man-(1-&gt;4)-beta-D-GlcNAc-(1-&gt;4)-beta-D-GlcNAc)-L-asparaginyl-[protein] (N-glucan mannose isomer 9A1,2,3B1,2,3) + 4 H2O = N(4)-(alpha-D-Man-(1-&gt;3)-[alpha-D-Man-(1-&gt;3)-[alpha-D-Man-(1-&gt;6)]-alpha-D-Man-(1-&gt;6)]-beta-D-Man-(1-&gt;4)-beta-D-GlcNAc-(1-&gt;4)-beta-D-GlcNAc)-L-asparaginyl-[protein] (N-glucan mannose isomer 5A1,2) + 4 beta-D-mannose. It catalyses the reaction N(4)-(alpha-D-Man-(1-&gt;2)-alpha-D-Man-(1-&gt;2)-alpha-D-Man-(1-&gt;3)-[alpha-D-Man-(1-&gt;3)-[alpha-D-Man-(1-&gt;2)-alpha-D-Man-(1-&gt;6)]-alpha-D-Man-(1-&gt;6)]-beta-D-Man-(1-&gt;4)-beta-D-GlcNAc-(1-&gt;4)-beta-D-GlcNAc)-L-asparaginyl-[protein] (N-glucan mannose isomer 8A1,2,3B1,3) + 3 H2O = N(4)-(alpha-D-Man-(1-&gt;3)-[alpha-D-Man-(1-&gt;3)-[alpha-D-Man-(1-&gt;6)]-alpha-D-Man-(1-&gt;6)]-beta-D-Man-(1-&gt;4)-beta-D-GlcNAc-(1-&gt;4)-beta-D-GlcNAc)-L-asparaginyl-[protein] (N-glucan mannose isomer 5A1,2) + 3 beta-D-mannose. Its pathway is protein modification; protein glycosylation. In terms of biological role, involved in the maturation of Asn-linked oligosaccharides. Trim a single alpha-1,2-linked mannose residue from Man(9)GlcNAc(2) to produce Man(8)GlcNAc(2). The sequence is that of Mannosyl-oligosaccharide 1,2-alpha-mannosidase (MNS1) from Candida albicans (Yeast).